The following is a 139-amino-acid chain: NADPH-dependent 7-cyano-7-deazaguanine reductase (139 aa).

Cysteine 34 functions as the Thioimide intermediate in the catalytic mechanism. The active-site Proton donor is aspartate 41. Substrate contacts are provided by residues isoleucine 56–leucine 58 and histidine 75–glutamate 76.

It belongs to the GTP cyclohydrolase I family. QueF type 1 subfamily.

Its subcellular location is the cytoplasm. It carries out the reaction 7-aminomethyl-7-carbaguanine + 2 NADP(+) = 7-cyano-7-deazaguanine + 2 NADPH + 3 H(+). Its pathway is tRNA modification; tRNA-queuosine biosynthesis. In terms of biological role, catalyzes the NADPH-dependent reduction of 7-cyano-7-deazaguanine (preQ0) to 7-aminomethyl-7-deazaguanine (preQ1). The chain is NADPH-dependent 7-cyano-7-deazaguanine reductase from Nitrosomonas eutropha (strain DSM 101675 / C91 / Nm57).